A 543-amino-acid polypeptide reads, in one-letter code: Carboxypeptidase Y homolog A (543 aa).

The first 17 residues, 1 to 17 (MRVLPATLLVGAATAAV), serve as a signal peptide directing secretion. The propeptide occupies 18-124 (PPFQQILGLP…KLEAYDLRVK (107 aa)). 5 disulfide bridges follow: Cys-179–Cys-419, Cys-313–Cys-327, Cys-337–Cys-360, Cys-344–Cys-353, and Cys-382–Cys-389. The N-linked (GlcNAc...) asparagine glycan is linked to Asn-210. Ser-266 is a catalytic residue. Asp-458 is an active-site residue. N-linked (GlcNAc...) asparagine glycosylation is present at Asn-509. His-520 is an active-site residue.

It belongs to the peptidase S10 family.

It localises to the vacuole. It carries out the reaction Release of a C-terminal amino acid with broad specificity.. Its function is as follows. Vacuolar carboxypeptidase involved in degradation of small peptides. Digests preferentially peptides containing an aliphatic or hydrophobic residue in P1' position, as well as methionine, leucine or phenylalanine in P1 position of ester substrate. The chain is Carboxypeptidase Y homolog A (cpyA) from Aspergillus clavatus (strain ATCC 1007 / CBS 513.65 / DSM 816 / NCTC 3887 / NRRL 1 / QM 1276 / 107).